The following is a 461-amino-acid chain: Probable lipid II flippase MurJ (461 aa).

Transmembrane regions (helical) follow at residues 5 to 25 (ILGAGVYSDIFFVAFKLPNLF), 51 to 71 (FASLVGLIFCIVLFMWCLLVA), 96 to 116 (IVAINFWYLLLVFITTFLGAL), 123 to 143 (FFASAYSASLLNVCMILALLI), 156 to 176 (LSYGVLLGGVAQILLHFYPLV), 229 to 249 (IASFLDTTIASFLASGSVSYL), 258 to 278 (LPLALFAIAISTALFPSIAIA), 293 to 313 (KAWFFLVGVLLLCSIGGIMLS), 337 to 357 (VFSLYLLGLLPFGLTKLFSLW), 372 to 392 (LISLFLGLAASLSLMPLLGVL), 402 to 422 (GLFLFVLTIKAFGFQLFLGII), and 429 to 449 (LVILFLACVEILLLLAFKSWV).

Belongs to the MurJ/MviN family.

The protein resides in the cell inner membrane. It functions in the pathway cell wall biogenesis; peptidoglycan biosynthesis. In terms of biological role, involved in peptidoglycan biosynthesis. Transports lipid-linked peptidoglycan precursors from the inner to the outer leaflet of the cytoplasmic membrane. The sequence is that of Probable lipid II flippase MurJ from Helicobacter pylori (strain ATCC 700392 / 26695) (Campylobacter pylori).